A 131-amino-acid polypeptide reads, in one-letter code: Ribonuclease VapC42 (131 aa).

A PINc domain is found at 1 to 125; it reads MIVDTSAIVA…FRGDDFTHTD (125 aa). Mg(2+) is bound by residues D4 and D100.

Belongs to the PINc/VapC protein family. The cofactor is Mg(2+).

Its function is as follows. Toxic component of a type II toxin-antitoxin (TA) system. An RNase. Its cognate antitoxin is VapB42. The chain is Ribonuclease VapC42 from Mycobacterium tuberculosis (strain CDC 1551 / Oshkosh).